A 340-amino-acid chain; its full sequence is S-adenosylmethionine:tRNA ribosyltransferase-isomerase (340 aa).

The protein belongs to the QueA family. Monomer.

It is found in the cytoplasm. It carries out the reaction 7-aminomethyl-7-carbaguanosine(34) in tRNA + S-adenosyl-L-methionine = epoxyqueuosine(34) in tRNA + adenine + L-methionine + 2 H(+). It functions in the pathway tRNA modification; tRNA-queuosine biosynthesis. In terms of biological role, transfers and isomerizes the ribose moiety from AdoMet to the 7-aminomethyl group of 7-deazaguanine (preQ1-tRNA) to give epoxyqueuosine (oQ-tRNA). This is S-adenosylmethionine:tRNA ribosyltransferase-isomerase from Francisella tularensis subsp. holarctica (strain OSU18).